The chain runs to 362 residues: MIIDRVEVETINSFSKLELLKEVYGLISILPILTLLLGITIEVLVIVWLEREISASIQQRIGPEYAGPLGLLQAIADGTKLLFKEDILPSRGDISLFSIGPSIAVISVLLSFLVIPLGYHFVLADLSIGVFLWIAISSIAPIGLLMAGYSSNNKYSFLGGLRAAAQSISYEIPLTFCVLAISLLSNSLSTVDIVEAQSKYGFFGWNIWRQPIGFLVFLISSLAECERLPFDLPEAEEELVAGYQTEYSGIKYGLFYLVSYLNLLVSSLFVTVLYLGGWNFSIPYISFFDFFQMNKAVGILEMTMGIFITLTKAYLFLFISITIRWTLPRMRMDQLLNLGWKFLLPISLGNLLLTTSFQLVSL.

A run of 8 helical transmembrane segments spans residues 29 to 49 (ILPILTLLLGITIEVLVIVWL), 103 to 123 (IAVISVLLSFLVIPLGYHFVL), 128 to 148 (IGVFLWIAISSIAPIGLLMAG), 164 to 184 (AAQSISYEIPLTFCVLAISLL), 202 to 222 (FFGWNIWRQPIGFLVFLISSL), 247 to 267 (YSGIKYGLFYLVSYLNLLVSS), 303 to 323 (TMGIFITLTKAYLFLFISITI), and 342 to 362 (FLLPISLGNLLLTTSFQLVSL).

This sequence belongs to the complex I subunit 1 family. NDH is composed of at least 16 different subunits, 5 of which are encoded in the nucleus.

The protein localises to the plastid. It localises to the chloroplast thylakoid membrane. The enzyme catalyses a plastoquinone + NADH + (n+1) H(+)(in) = a plastoquinol + NAD(+) + n H(+)(out). It carries out the reaction a plastoquinone + NADPH + (n+1) H(+)(in) = a plastoquinol + NADP(+) + n H(+)(out). In terms of biological role, NDH shuttles electrons from NAD(P)H:plastoquinone, via FMN and iron-sulfur (Fe-S) centers, to quinones in the photosynthetic chain and possibly in a chloroplast respiratory chain. The immediate electron acceptor for the enzyme in this species is believed to be plastoquinone. Couples the redox reaction to proton translocation, and thus conserves the redox energy in a proton gradient. The protein is NAD(P)H-quinone oxidoreductase subunit 1, chloroplastic of Hordeum vulgare (Barley).